Consider the following 145-residue polypeptide: Large ribosomal subunit protein mL43 (145 aa).

It belongs to the mitochondrion-specific ribosomal protein mL43 family. In terms of assembly, component of the mitochondrial large ribosomal subunit (mt-LSU). Mature yeast 74S mitochondrial ribosomes consist of a small (37S) and a large (54S) subunit. The 37S small subunit contains a 15S ribosomal RNA (15S mt-rRNA) and at least 32 different proteins. The 54S large subunit contains a 21S rRNA (21S mt-rRNA) and at least 45 different proteins.

It is found in the mitochondrion. In terms of biological role, component of the mitochondrial ribosome (mitoribosome), a dedicated translation machinery responsible for the synthesis of mitochondrial genome-encoded proteins, including at least some of the essential transmembrane subunits of the mitochondrial respiratory chain. The mitoribosomes are attached to the mitochondrial inner membrane and translation products are cotranslationally integrated into the membrane. Also has an extraribosomal function, being essential for mitochondrial genome integrity. May interact with MHR1 to take part in the mtDNA repair mechanism. The polypeptide is Large ribosomal subunit protein mL43 (mrpl51) (Schizosaccharomyces pombe (strain 972 / ATCC 24843) (Fission yeast)).